A 492-amino-acid polypeptide reads, in one-letter code: Sestrin-1 (492 aa).

Positions 71-252 (FADSFAALGR…ICDITNGNHS (182 aa)) are N-terminal domain; may mediate the alkylhydroperoxide reductase activity. The active-site Cysteine sulfenic acid (-SOH) intermediate is cysteine 130. Phosphoserine occurs at positions 293 and 314. The interval 321–492 (PARDVSRHFE…ALRAITRYMT (172 aa)) is C-terminal domain; mediates TORC1 regulation. L-leucine is bound by residues 386-389 (TYNT), threonine 398, and glutamate 463.

It belongs to the sestrin family. As to quaternary structure, interacts with the GATOR2 complex which is composed of MIOS, SEC13, SEH1L, WDR24 and WDR59; the interaction is negatively regulated by leucine. Interacts with RRAGA, RRAGB, RRAGC and RRAGD; may function as a guanine nucleotide dissociation inhibitor for RRAGs and regulate them. Interacts with KEAP1, RBX1 and SQSTM1; in the SQSTM1-dependent autophagic degradation of KEAP1. May interact with PRDX1. In terms of tissue distribution, highly expressed in heart and also detected in liver and skeletal muscles (at protein level).

Its subcellular location is the nucleus. The protein resides in the cytoplasm. It carries out the reaction a hydroperoxide + L-cysteinyl-[protein] = S-hydroxy-L-cysteinyl-[protein] + an alcohol. Its function is as follows. Functions as an intracellular leucine sensor that negatively regulates the TORC1 signaling pathway through the GATOR complex. In absence of leucine, binds the GATOR subcomplex GATOR2 and prevents TORC1 signaling. Binding of leucine to SESN2 disrupts its interaction with GATOR2 thereby activating the TORC1 signaling pathway. This stress-inducible metabolic regulator may also play a role in protection against oxidative and genotoxic stresses. May positively regulate the transcription by NFE2L2 of genes involved in the response to oxidative stress by facilitating the SQSTM1-mediated autophagic degradation of KEAP1. Moreover, may prevent the accumulation of reactive oxygen species (ROS) through the alkylhydroperoxide reductase activity born by the N-terminal domain of the protein. Was originally reported to contribute to oxidative stress resistance by reducing PRDX1. However, this could not be confirmed. This chain is Sestrin-1, found in Mus musculus (Mouse).